Here is a 262-residue protein sequence, read N- to C-terminus: uncharacterized protein (262 aa).

6 helical membrane passes run 7–27, 58–78, 114–134, 140–160, 179–199, and 216–236; these read LAVA…LAHM, DTLG…IVFG, FLAF…VLGG, GGFQ…IAFG, GALG…YYLF, and IITA…VLAG.

It is found in the cell membrane. This is an uncharacterized protein from Methanocaldococcus jannaschii (strain ATCC 43067 / DSM 2661 / JAL-1 / JCM 10045 / NBRC 100440) (Methanococcus jannaschii).